Here is a 399-residue protein sequence, read N- to C-terminus: Probable WRKY transcription factor 48 (399 aa).

Basic and acidic residues-rich tracts occupy residues 1-11 (MEKKKEEDHHH) and 19-38 (KEIK…EQKQ). Disordered regions lie at residues 1–57 (MEKK…TSSD) and 138–202 (AESS…KNQK). Positions 143–161 (VVNTTPTSPNSTSVSSSSN) are enriched in low complexity. Over residues 162–171 (EAANDNNSGK) the composition is skewed to polar residues. The span at 184-193 (QQEQKGTKPQ) shows a compositional bias: low complexity. Residues 215-280 (SDIDNLDDGY…YEGQHTHPFP (66 aa)) constitute a DNA-binding region (WRKY). Positions 361–399 (QASTSTSSSIRDHGLLQDILPSQIRSDTINTQTNEENKK) are disordered. Residues 383–399 (QIRSDTINTQTNEENKK) show a composition bias toward polar residues.

It is found in the nucleus. Its function is as follows. Transcription factor. Interacts specifically with the W box (5'-(T)TGAC[CT]-3'), a frequently occurring elicitor-responsive cis-acting element. This chain is Probable WRKY transcription factor 48 (WRKY48), found in Arabidopsis thaliana (Mouse-ear cress).